The chain runs to 334 residues: UstYa family oxidase aprY (334 aa).

A helical transmembrane segment spans residues 55 to 75 (IWILLTITNLIILGITVSMIV). Residue Asn-112 is glycosylated (N-linked (GlcNAc...) asparagine). The short motif at 185 to 189 (HQIHC) is the HXXHC 1 element. A glycan (N-linked (GlcNAc...) asparagine) is linked at Asn-214. The short motif at 223–227 (HLGHC) is the HXXHC 2 element. Over residues 306–318 (SELGEKLGKHQKQ) the composition is skewed to basic and acidic residues. Residues 306–334 (SELGEKLGKHQKQEGVLGQAGHQHTKRHE) are disordered.

Belongs to the ustYa family.

Its subcellular location is the membrane. Its pathway is secondary metabolite biosynthesis. UstYa family oxidase; part of the gene cluster that mediates the biosynthesis of the asperipin-2a, a bicyclic peptide that possesses two macrocyclic ether rings consisting of 14- and 17-membered paracyclophans. Within the pathway, aprY is responsible for the synthesis of the bicyclic structure of asperipin-2a. The pathway starts with the processing of the precursor aprA by kexin proteases to produce 11 identical copies of the hexapeptide Phe-Tyr-Tyr-Thr-Gly-Tyr. Macrocyclization of asperipin-2a may accompany an alpha-hydroxylation-dehydration sequence to give an imine, which is readily hydrolyzed to yield putative ketone intermediate. The reductase aprR may be required for the final reduction to yield asperipin-2a. This Aspergillus flavus (strain ATCC 200026 / FGSC A1120 / IAM 13836 / NRRL 3357 / JCM 12722 / SRRC 167) protein is UstYa family oxidase aprY.